The primary structure comprises 100 residues: Urease subunit gamma (100 aa).

The protein belongs to the urease gamma subunit family. As to quaternary structure, heterotrimer of UreA (gamma), UreB (beta) and UreC (alpha) subunits. Three heterotrimers associate to form the active enzyme.

It is found in the cytoplasm. It catalyses the reaction urea + 2 H2O + H(+) = hydrogencarbonate + 2 NH4(+). Its pathway is nitrogen metabolism; urea degradation; CO(2) and NH(3) from urea (urease route): step 1/1. The chain is Urease subunit gamma from Prochlorococcus marinus (strain NATL2A).